The primary structure comprises 533 residues: Death domain-containing ATP nucleosidase (533 aa).

Positions 1-262 are death domain; the sequence is MDAAAIISLL…TAAGKEEKVS (262 aa). Residues 184–248 are disordered; sequence STFVSDDATQ…TQTSTNSFNS (65 aa). A compositionally biased stretch (polar residues) spans 218–227; it reads PSAQVNQPPT. Over residues 236–248 the composition is skewed to low complexity; the sequence is SGSTQTSTNSFNS. Residues 263 to 533 are purine nucleoside phosphorylase domain; that stretch reads DDVTKGIKFL…HLDDDRTIHM (271 aa).

It catalyses the reaction ATP + H2O = D-ribose 5-triphosphate + adenine. It carries out the reaction dATP + H2O = 2-deoxyribose 5-triphosphate + adenine. The C-terminal purine nucleoside phosphorylase (PNP) domain cleaves the N-glycosidic bond of ATP, and to a lesser extent dATP, to release adenine and a sugar triphosphate; has weak activity on ADP and AMP and no activity on dADP, dAMP, adenosine, deoxyadenosine or other (d)NTPs. In Amphimedon queenslandica (Sponge), this protein is Death domain-containing ATP nucleosidase (109585858).